We begin with the raw amino-acid sequence, 559 residues long: Chaperonin GroEL 1 (559 aa).

Residues 29-32, 86-90, glycine 413, 476-478, and aspartate 492 contribute to the ATP site; these read TIGP, DGTTT, and NAL. The segment at 521-541 is disordered; the sequence is KPEPPAPAPAGDGDPMGGMGG.

It belongs to the chaperonin (HSP60) family. In terms of assembly, forms a cylinder of 14 subunits composed of two heptameric rings stacked back-to-back. Interacts with the co-chaperonin GroES.

It localises to the cytoplasm. The catalysed reaction is ATP + H2O + a folded polypeptide = ADP + phosphate + an unfolded polypeptide.. In terms of biological role, together with its co-chaperonin GroES, plays an essential role in assisting protein folding. The GroEL-GroES system forms a nano-cage that allows encapsulation of the non-native substrate proteins and provides a physical environment optimized to promote and accelerate protein folding. The protein is Chaperonin GroEL 1 of Synechococcus sp. (strain CC9605).